Consider the following 358-residue polypeptide: Probable protein phosphatase 2C 34 (358 aa).

The PPM-type phosphatase domain occupies 62 to 349 (LASVFSRRGE…DDISAVCLFF (288 aa)). Mn(2+) contacts are provided by aspartate 98, glycine 99, aspartate 294, and aspartate 340.

Belongs to the PP2C family. Requires Mg(2+) as cofactor. The cofactor is Mn(2+).

The enzyme catalyses O-phospho-L-seryl-[protein] + H2O = L-seryl-[protein] + phosphate. It carries out the reaction O-phospho-L-threonyl-[protein] + H2O = L-threonyl-[protein] + phosphate. The chain is Probable protein phosphatase 2C 34 from Arabidopsis thaliana (Mouse-ear cress).